Here is a 291-residue protein sequence, read N- to C-terminus: UDP-N-acetylenolpyruvoylglucosamine reductase (291 aa).

In terms of domain architecture, FAD-binding PCMH-type spans 22–187; the sequence is RIGGPARYFK…ASATFQLTKD (166 aa). R166 is an active-site residue. The Proton donor role is filled by C214. Residue E283 is part of the active site.

This sequence belongs to the MurB family. FAD is required as a cofactor.

The protein resides in the cytoplasm. The enzyme catalyses UDP-N-acetyl-alpha-D-muramate + NADP(+) = UDP-N-acetyl-3-O-(1-carboxyvinyl)-alpha-D-glucosamine + NADPH + H(+). The protein operates within cell wall biogenesis; peptidoglycan biosynthesis. Its function is as follows. Cell wall formation. The sequence is that of UDP-N-acetylenolpyruvoylglucosamine reductase from Chlamydia trachomatis serovar L2 (strain ATCC VR-902B / DSM 19102 / 434/Bu).